The following is a 539-amino-acid chain: T-complex protein 1 subunit delta (539 aa).

Residues 1–29 (MPENVAPRSGATAGAAGGRGKGAYQDRDK) form a disordered region. Omega-N-methylarginine is present on Arg-19. N6-acetyllysine is present on Lys-21. The residue at position 36 (Ser-36) is a Phosphoserine. Gly-53 contacts ADP. An ATP-binding site is contributed by Gly-53. Asp-104 provides a ligand contact to Mg(2+). 7 residues coordinate ADP: Gly-105, Thr-106, Thr-107, Ser-108, Asn-172, Ser-173, and Lys-174. 2 residues coordinate ATP: Gly-105 and Thr-106. Lys-174 is an ATP binding site. A phosphoserine mark is found at Ser-184 and Ser-202. Lys-288, Lys-302, Lys-319, and Lys-326 each carry N6-acetyllysine. An ADP-binding site is contributed by Gly-425. Ser-444 is subject to Phosphoserine. Position 510 (Gln-510) interacts with ADP.

This sequence belongs to the TCP-1 chaperonin family. Component of the chaperonin-containing T-complex (TRiC), a hexadecamer composed of two identical back-to-back stacked rings enclosing a protein folding chamber. Each ring is made up of eight different subunits: TCP1/CCT1, CCT2, CCT3, CCT4, CCT5, CCT6A/CCT6, CCT7, CCT8. Interacts with PACRG. Interacts with DNAAF4. Interacts with DLEC1.

Its subcellular location is the cytoplasm. It localises to the melanosome. It is found in the cytoskeleton. The protein resides in the microtubule organizing center. The protein localises to the centrosome. Its subcellular location is the cilium basal body. It catalyses the reaction ATP + H2O = ADP + phosphate + H(+). Its function is as follows. Component of the chaperonin-containing T-complex (TRiC), a molecular chaperone complex that assists the folding of actin, tubulin and other proteins upon ATP hydrolysis. The TRiC complex mediates the folding of WRAP53/TCAB1, thereby regulating telomere maintenance. As part of the TRiC complex may play a role in the assembly of BBSome, a complex involved in ciliogenesis regulating transports vesicles to the cilia. The polypeptide is T-complex protein 1 subunit delta (CCT4) (Homo sapiens (Human)).